We begin with the raw amino-acid sequence, 155 residues long: Small ribosomal subunit protein uS17 (155 aa).

Alanine 2 carries the post-translational modification N-acetylalanine.

It belongs to the universal ribosomal protein uS17 family.

This Drosophila yakuba (Fruit fly) protein is Small ribosomal subunit protein uS17.